A 30-amino-acid polypeptide reads, in one-letter code: Phospholemman-like protein (30 aa).

It belongs to the FXYD family. Post-translationally, phosphorylated by protein kinase a (PK-A) and protein kinase C (PK-C). Phosphorylated in response to insulin and adrenergic stimulation.

It localises to the microsome membrane. The protein resides in the endoplasmic reticulum membrane. Induces a hyperpolarization-activated chloride current when expressed in Xenopus oocytes. May have a functional role in muscle contraction. The chain is Phospholemman-like protein from Squalus acanthias (Spiny dogfish).